The sequence spans 291 residues: Elongation factor Ts (291 aa).

The segment at 79-82 is involved in Mg(2+) ion dislocation from EF-Tu; sequence TDFV.

The protein belongs to the EF-Ts family.

The protein localises to the cytoplasm. In terms of biological role, associates with the EF-Tu.GDP complex and induces the exchange of GDP to GTP. It remains bound to the aminoacyl-tRNA.EF-Tu.GTP complex up to the GTP hydrolysis stage on the ribosome. The polypeptide is Elongation factor Ts (Leuconostoc mesenteroides subsp. mesenteroides (strain ATCC 8293 / DSM 20343 / BCRC 11652 / CCM 1803 / JCM 6124 / NCDO 523 / NBRC 100496 / NCIMB 8023 / NCTC 12954 / NRRL B-1118 / 37Y)).